Reading from the N-terminus, the 164-residue chain is Peptidyl-prolyl cis-trans isomerase A (164 aa).

Met-1 carries the N-acetylmethionine modification. The residue at position 2 (Val-2) is an N-acetylvaline; in Peptidyl-prolyl cis-trans isomerase A, N-terminally processed. Residues 7-163 form the PPIase cyclophilin-type domain; sequence FFDIAVDGEP…KKITIADCGQ (157 aa). The residue at position 28 (Lys-28) is an N6-acetyllysine; alternate. Residue Lys-28 forms a Glycyl lysine isopeptide (Lys-Gly) (interchain with G-Cter in SUMO2); alternate linkage. Lys-28 participates in a covalent cross-link: Glycyl lysine isopeptide (Lys-Gly) (interchain with G-Cter in ubiquitin); alternate. An N6-acetyllysine mark is found at Lys-44 and Lys-76. Position 77 is a phosphoserine (Ser-77). Lys-82 carries the N6-acetyllysine; alternate modification. Lys-82 is covalently cross-linked (Glycyl lysine isopeptide (Lys-Gly) (interchain with G-Cter in SUMO2); alternate). The residue at position 93 (Thr-93) is a Phosphothreonine. Asn-108 carries N-linked (GlcNAc...) asparagine glycosylation. Residues Lys-125, Lys-131, and Lys-133 each carry the N6-acetyllysine modification.

It belongs to the cyclophilin-type PPIase family. PPIase A subfamily. As to quaternary structure, interacts with protein phosphatase PPP3CA/calcineurin A. Interacts with isoform 2 of BSG/CD147. Interacts with FOXO1; the interaction promotes FOXO1 dephosphorylation, nuclear accumulation and transcriptional activity. Interacts with integrin ITGA2B:ITGB3; the interaction is ROS and peptidyl-prolyl cis-trans isomerase (PPIase) activity-dependent and is increased in the presence of thrombin. Interacts with MAP3K5. Interacts with TARDBP; the interaction is dependent on the RNA-binding activity of TARDBP and the PPIase activity of PPIA/CYPA and the acetylation of PPIA/CYPA at Lys-125 favors the interaction. Interacts with HNRNPA1, HNRNPA2B1, HNRNPC, RBMX, HNRNPK and HNRNPM. Post-translationally, acetylation at Lys-125 markedly inhibits catalysis of cis to trans isomerization. PPIA acetylation also antagonizes the immunosuppressive effects of cyclosporine by inhibiting the sequential steps of cyclosporine binding and calcineurin inhibition. Acetylation at Lys-125 favors the interaction with TARDBP.

The protein resides in the cytoplasm. It is found in the secreted. It localises to the nucleus. The enzyme catalyses [protein]-peptidylproline (omega=180) = [protein]-peptidylproline (omega=0). Its activity is regulated as follows. Binds cyclosporin A (CsA). CsA mediates some of its effects via an inhibitory action on PPIase. Catalyzes the cis-trans isomerization of proline imidic peptide bonds in oligopeptides. Exerts a strong chemotactic effect on leukocytes partly through activation of one of its membrane receptors BSG/CD147, initiating a signaling cascade that culminates in MAPK/ERK activation. Activates endothelial cells (ECs) in a proinflammatory manner by stimulating activation of NF-kappa-B and ERK, JNK and p38 MAP-kinases and by inducing expression of adhesion molecules including SELE and VCAM1. Induces apoptosis in ECs by promoting the FOXO1-dependent expression of CCL2 and BCL2L11 which are involved in EC chemotaxis and apoptosis. In response to oxidative stress, initiates proapoptotic and antiapoptotic signaling in ECs via activation of NF-kappa-B and AKT1 and up-regulation of antiapoptotic protein BCL2. Negatively regulates MAP3K5/ASK1 kinase activity, autophosphorylation and oxidative stress-induced apoptosis mediated by MAP3K5/ASK1. Necessary for the assembly of TARDBP in heterogeneous nuclear ribonucleoprotein (hnRNP) complexes and regulates TARDBP binding to RNA UG repeats and TARDBP-dependent expression of HDAC6, ATG7 and VCP which are involved in clearance of protein aggregates. Plays an important role in platelet activation and aggregation. Regulates calcium mobilization and integrin ITGA2B:ITGB3 bidirectional signaling via increased ROS production as well as by facilitating the interaction between integrin and the cell cytoskeleton. Binds heparan sulfate glycosaminoglycans. This Saguinus oedipus (Cotton-top tamarin) protein is Peptidyl-prolyl cis-trans isomerase A (PPIA).